A 189-amino-acid chain; its full sequence is Chitin synthase 1 (189 aa).

It belongs to the chitin synthase family. Class I subfamily.

It is found in the cell membrane. The catalysed reaction is [(1-&gt;4)-N-acetyl-beta-D-glucosaminyl](n) + UDP-N-acetyl-alpha-D-glucosamine = [(1-&gt;4)-N-acetyl-beta-D-glucosaminyl](n+1) + UDP + H(+). Functionally, polymerizes chitin, a structural polymer of the cell wall and septum, by transferring the sugar moiety of UDP-GlcNAc to the non-reducing end of the growing chitin polymer. The polypeptide is Chitin synthase 1 (chs1) (Botryotinia fuckeliana (Noble rot fungus)).